A 444-amino-acid chain; its full sequence is Phosphoglucosamine mutase (444 aa).

The Phosphoserine intermediate role is filled by Ser103. The Mg(2+) site is built by Ser103, Asp241, Asp243, and Asp245. Position 103 is a phosphoserine (Ser103).

This sequence belongs to the phosphohexose mutase family. It depends on Mg(2+) as a cofactor. Activated by phosphorylation.

The enzyme catalyses alpha-D-glucosamine 1-phosphate = D-glucosamine 6-phosphate. Its function is as follows. Catalyzes the conversion of glucosamine-6-phosphate to glucosamine-1-phosphate. This is Phosphoglucosamine mutase from Deinococcus radiodurans (strain ATCC 13939 / DSM 20539 / JCM 16871 / CCUG 27074 / LMG 4051 / NBRC 15346 / NCIMB 9279 / VKM B-1422 / R1).